We begin with the raw amino-acid sequence, 651 residues long: Epithelial sodium channel subunit beta (651 aa).

Topologically, residues 1–50 (MFLKRWFIRALHRLQKGPGYGYSELFVWYCNNTNTHGPKRLIIEGPKKKT) are cytoplasmic. Residues 51–71 (LWSLFTVTFACLVFWQWGLLI) form a helical membrane-spanning segment. At 72–541 (QTYLSWGVSV…GGQFGFWMGG (470 aa)) the chain is on the extracellular side. 8 disulfide bridges follow: C98-C281, C205-C212, C258-C265, C370-C457, C395-C453, C399-C449, C408-C435, and C410-C424. The chain crosses the membrane as a helical span at residues 542 to 562 (SVLCIIEFGEVFIDCIWIAVI). Residues 563 to 651 (RFVKWYKNRK…TEHHSDSEDL (89 aa)) lie on the Cytoplasmic side of the membrane. The segment at 612-651 (QPPDLYLPTTLEIPGTPPPKYDSLRVHPIDTEHHSDSEDL) is disordered. Positions 633-651 (DSLRVHPIDTEHHSDSEDL) are enriched in basic and acidic residues.

It belongs to the amiloride-sensitive sodium channel (TC 1.A.6) family. SCNN1B subfamily. In terms of assembly, component of the heterotrimeric epithelial sodium channel (ENaC) composed of an alpha/SCNN1A, a beta/SCNN1B and a gamma/SCNN1G subunit. In terms of tissue distribution, strongly expressed in gill, kidney and rectum and more weakly in brain, eye, liver and muscle.

The protein resides in the apical cell membrane. It is found in the cytoplasmic vesicle membrane. The catalysed reaction is Na(+)(in) = Na(+)(out). Its activity is regulated as follows. Originally identified and characterized by its inhibition by the diuretic drug amiloride. Its function is as follows. This is one of the three pore-forming subunits of the heterotrimeric epithelial sodium channel (ENaC), a critical regulator of sodium balance and fluid homeostasis. ENaC operates in epithelial tissues, where it mediates the electrodiffusion of sodium ions from extracellular fluid through the apical membrane of cells, with water following osmotically. In Neoceratodus forsteri (Australian lungfish), this protein is Epithelial sodium channel subunit beta.